A 307-amino-acid polypeptide reads, in one-letter code: MTEHGLMSELDLLVSEGRNPRTMDIDLLPTIDVLRKINDEDRLVPVAVEKVLPEIAAAVDRIVLAFQKGARLIYVGAGTSGRLGVLDASECPPTFGVPEDMVIGLIAGGPDALVRSTEGAEDDPKMGAQALQEIGLTPDDVVMGIAVSGRTPYVIGGLNYAKQVGATTVALSCNPASTIAGIADIAISPVVGPEVLTGSTRLKSGTAQKLVLNMLTTASMIRIGKSFQNLMVDLNPSNKKLVARATRMVMQTTGCTAQQAKQALHQTSNDVKLAILVTITGLDVEAARAALGKAGGFLRKAISDPTA.

The SIS domain maps to 62–225 (IVLAFQKGAR…TTASMIRIGK (164 aa)). Glutamate 90 functions as the Proton donor in the catalytic mechanism. Glutamate 121 is an active-site residue.

This sequence belongs to the GCKR-like family. MurNAc-6-P etherase subfamily. Homodimer.

It catalyses the reaction N-acetyl-D-muramate 6-phosphate + H2O = N-acetyl-D-glucosamine 6-phosphate + (R)-lactate. The protein operates within amino-sugar metabolism; 1,6-anhydro-N-acetylmuramate degradation. Its pathway is amino-sugar metabolism; N-acetylmuramate degradation. It functions in the pathway cell wall biogenesis; peptidoglycan recycling. Functionally, specifically catalyzes the cleavage of the D-lactyl ether substituent of MurNAc 6-phosphate, producing GlcNAc 6-phosphate and D-lactate. Together with AnmK, is also required for the utilization of anhydro-N-acetylmuramic acid (anhMurNAc) either imported from the medium or derived from its own cell wall murein, and thus plays a role in cell wall recycling. The sequence is that of N-acetylmuramic acid 6-phosphate etherase from Mesorhizobium japonicum (strain LMG 29417 / CECT 9101 / MAFF 303099) (Mesorhizobium loti (strain MAFF 303099)).